The following is a 102-amino-acid chain: MVRYRVRSPSEPSHEVYRQQLHGQEQGHHGQEEQGLSPEHVEVYERTHGHSHYRRRHCSRRRLRRIHRQQHRSCRRRKRRSCRHRRKHRRGCRTRRRTCRRH.

2 disordered regions span residues 1–40 (MVRYRVRSPSEPSHEVYRQQLHGQEQGHHGQEEQGLSPEH) and 67–102 (HRQQHRSCRRRKRRSCRHRRKHRRGCRTRRRTCRRH). Phosphoserine is present on residues Ser8, Ser10, and Ser37.

This sequence belongs to the protamine P2 family. As to quaternary structure, interacts with TDRP. In terms of processing, proteolytic processing into mature chains is required for histone eviction during spermatogenesis. Transition proteins (TNP1 and TNP2) are required for processing. As to expression, testis.

Its subcellular location is the nucleus. It localises to the chromosome. In terms of biological role, protamines substitute for histones in the chromatin of sperm during the haploid phase of spermatogenesis. They compact sperm DNA into a highly condensed, stable and inactive complex. This chain is Protamine-2 (PRM2), found in Pan troglodytes (Chimpanzee).